The following is a 354-amino-acid chain: Ephrin-4 (354 aa).

The signal sequence occupies residues 1 to 22 (MKRPLDFLLAICLILLRSSTFA). The 151-residue stretch at 23 to 173 (DEHTVHWNST…SKNMRLSMKV (151 aa)) folds into the Ephrin RBD domain. N-linked (GlcNAc...) asparagine glycosylation occurs at N30. 2 disulfide bridges follow: C55–C92 and C80–C162. The segment at 173–196 (VLSSQPTPSPSSKPARSRTDARRQ) is disordered. Low complexity predominate over residues 175-186 (SSQPTPSPSSKP). The GPI-anchor amidated serine moiety is linked to residue S335. The propeptide at 336–354 (SSSLPTFLIVFLIAVNLLF) is removed in mature form.

It belongs to the ephrin family. Post-translationally, may undergo proteolysis by metalloprotease sup-17 to give rise to a soluble form.

The protein localises to the cell membrane. In terms of biological role, regulates the formation or stabilization of cell-cell contacts at several stages of epithelial morphogenesis. In early embryonic development, involved in ventral closure of the epidermis. During male tail morphogenesis, regulates precursor cell sorting together with mab-20 and allows the formation of distinct sensory rays. Probably acts as a ligand for lad-2 to regulate axon guidance of several neurons including SDQL, SDQR, SMD and PLN neurons during neurogenesis. This chain is Ephrin-4 (efn-4), found in Caenorhabditis briggsae.